An 840-amino-acid chain; its full sequence is Probable inorganic carbon transporter subunit DabA 2 (840 aa).

Zn(2+)-binding residues include C356, D358, H540, and C555.

The protein belongs to the inorganic carbon transporter (TC 9.A.2) DabA family. In terms of assembly, forms a complex with DabB. It depends on Zn(2+) as a cofactor.

The protein resides in the cell inner membrane. Part of an energy-coupled inorganic carbon pump. This is Probable inorganic carbon transporter subunit DabA 2 from Bradyrhizobium sp. (strain ORS 278).